Consider the following 246-residue polypeptide: ATP synthase subunit a (246 aa).

A propeptide spans 1-3 (MFY) (removed in mature form). 7 consecutive transmembrane segments (helical) span residues 21–41 (LTFS…IIIF), 56–76 (WGVS…GQIG), 82–102 (YFPL…ISMI), 113–133 (VAVV…GLYL), 138–158 (FFAL…LVLI), 184–204 (LMLI…LGFV), and 206–226 (GIIP…IAII).

It belongs to the ATPase A chain family. As to quaternary structure, F-type ATPases have 2 components, CF(1) - the catalytic core - and CF(0) - the membrane proton channel. CF(1) has five subunits: alpha(3), beta(3), gamma(1), delta(1), epsilon(1). CF(0) has three main subunits: a, b and c.

It localises to the mitochondrion inner membrane. Functionally, mitochondrial membrane ATP synthase (F(1)F(0) ATP synthase or Complex V) produces ATP from ADP in the presence of a proton gradient across the membrane which is generated by electron transport complexes of the respiratory chain. F-type ATPases consist of two structural domains, F(1) - containing the extramembraneous catalytic core and F(0) - containing the membrane proton channel, linked together by a central stalk and a peripheral stalk. During catalysis, ATP synthesis in the catalytic domain of F(1) is coupled via a rotary mechanism of the central stalk subunits to proton translocation. Key component of the proton channel; it may play a direct role in the translocation of protons across the membrane. The protein is ATP synthase subunit a (ATP6) of Candida parapsilosis (Yeast).